The primary structure comprises 77 residues: Cell division topological specificity factor (77 aa).

The protein belongs to the MinE family.

Its function is as follows. Prevents the cell division inhibition by proteins MinC and MinD at internal division sites while permitting inhibition at polar sites. This ensures cell division at the proper site by restricting the formation of a division septum at the midpoint of the long axis of the cell. The chain is Cell division topological specificity factor from Nautilia profundicola (strain ATCC BAA-1463 / DSM 18972 / AmH).